The chain runs to 526 residues: Thymocyte selection-associated high mobility group box protein TOX (526 aa).

Residues 194–203 show a composition bias toward polar residues; that stretch reads NMGGTNVAHN. The segment at 194-264 is disordered; it reads NMGGTNVAHN…KKDPNEPQKP (71 aa). Low complexity predominate over residues 209-220; the sequence is GSKSATPSPSSS. The segment covering 228 to 245 has biased composition (basic and acidic residues); sequence DASKINGGEKRPASDMGK. The Nuclear localization signal motif lies at 237–256; it reads KRPASDMGKKPKTPKKKKKK. A compositionally biased stretch (basic residues) spans 246 to 256; the sequence is KPKTPKKKKKK. A DNA-binding region (HMG box) is located at residues 261 to 329; that stretch reads PQKPVSAYAL…EYLKQLAAYR (69 aa).

This sequence belongs to the high motility group (HMG) box superfamily. As to quaternary structure, interacts with HBO1 complex composed at least of KAT7/HBO1, ING4, MEAF6, and JADE2; this complex is involved in histone acetylation. Interacts with DNMT1, LEO1, PAF1, SAP130 and SIN3A; these interactors regulate chromatin remodeling. Interacts with an array of proteins involved in RNA processing and translation and DNA replication. Expressed in neurons of the subventricular zone (at protein level). Expressed in distinct subpopulations of thymocytes undergoing positive selection: double CD4-positive CD8-positive (DP) cells, CD4-positive CD8-low transitional cells and in single CD4-positive and CD8-positive cells (at protein level). Expressed in ILC progenitors and mature ILC subsets: ILC1, ILC2 and ILC3 (at protein level). Expressed in lymphoid tissue-inducer cells and bone marrow NK cell subsets. Abundant in thymus, liver and brain. Also detected in small intestine, spleen, stomach and testis. Highly expressed in tumor-infiltrating CD8-positive T cells (at protein level).

Its subcellular location is the nucleus. In terms of biological role, transcriptional regulator with a major role in neural stem cell commitment and corticogenesis as well as in lymphoid cell development and lymphoid tissue organogenesis. Binds to GC-rich DNA sequences in the proximity of transcription start sites and may alter chromatin structure, modifying access of transcription factors to DNA. During cortical development, controls the neural stem cell pool by inhibiting the switch from proliferative to differentiating progenitors. Beyond progenitor cells, promotes neurite outgrowth in newborn neurons migrating to reach the cortical plate. May activate or repress critical genes for neural stem cell fate such as SOX2, EOMES and ROBO2. Plays an essential role in the development of lymphoid tissue-inducer (LTi) cells, a subset necessary for the formation of secondary lymphoid organs: peripheral lymph nodes and Peyer's patches. Acts as a developmental checkpoint and regulates thymocyte positive selection toward T cell lineage commitment. Required for the development of various T cell subsets, including CD4-positive helper T cells, CD8-positive cytotoxic T cells, regulatory T cells and CD1D-dependent natural killer T (NKT) cells. Required for the differentiation of common lymphoid progenitors (CMP) to innate lymphoid cells (ILC). May regulate the NOTCH-mediated gene program, promoting differentiation of the ILC lineage. Required at the progenitor phase of NK cell development in the bone marrow to specify NK cell lineage commitment. Upon chronic antigen stimulation, diverts T cell development by promoting the generation of exhaustive T cells, while suppressing effector and memory T cell programming. May regulate the expression of genes encoding inhibitory receptors such as PDCD1 and induce the exhaustion program, to prevent the overstimulation of T cells and activation-induced cell death. In Mus musculus (Mouse), this protein is Thymocyte selection-associated high mobility group box protein TOX.